A 500-amino-acid polypeptide reads, in one-letter code: Glycerol kinase (500 aa).

Residue Thr11 participates in ADP binding. ATP contacts are provided by Thr11, Thr12, and Ser13. Thr11 provides a ligand contact to sn-glycerol 3-phosphate. Arg15 contributes to the ADP binding site. Arg81, Glu82, Tyr133, and Asp242 together coordinate sn-glycerol 3-phosphate. Glycerol is bound by residues Arg81, Glu82, Tyr133, Asp242, and Gln243. The ADP site is built by Thr264 and Gly307. ATP-binding residues include Thr264, Gly307, Gln311, and Gly411. Gly411 serves as a coordination point for ADP.

This sequence belongs to the FGGY kinase family.

The catalysed reaction is glycerol + ATP = sn-glycerol 3-phosphate + ADP + H(+). It participates in polyol metabolism; glycerol degradation via glycerol kinase pathway; sn-glycerol 3-phosphate from glycerol: step 1/1. Its activity is regulated as follows. Inhibited by fructose 1,6-bisphosphate (FBP). Its function is as follows. Key enzyme in the regulation of glycerol uptake and metabolism. Catalyzes the phosphorylation of glycerol to yield sn-glycerol 3-phosphate. This is Glycerol kinase from Rhodopseudomonas palustris (strain BisA53).